The following is a 246-amino-acid chain: Small ribosomal subunit protein uS2 (246 aa).

This sequence belongs to the universal ribosomal protein uS2 family.

The polypeptide is Small ribosomal subunit protein uS2 (Exiguobacterium sp. (strain ATCC BAA-1283 / AT1b)).